Consider the following 512-residue polypeptide: Maturase K (512 aa).

The protein belongs to the intron maturase 2 family. MatK subfamily.

The protein localises to the plastid. The protein resides in the chloroplast. Functionally, usually encoded in the trnK tRNA gene intron. Probably assists in splicing its own and other chloroplast group II introns. The polypeptide is Maturase K (Amorphophallus paeoniifolius (Whitespot giant arum)).